Consider the following 394-residue polypeptide: MRGQSLLTWVLAAAVTCAQAQDVPPWTEDCRKSTYPPSGPTYRGPVPWHTINLDLPPYKRWHELLAQKAPALRILVNSITSLVNTFVPSGKLMKMVDQKLPGMIGSLPDPFGEEMRGIADVTGIPLGEIISFNIFYELFTMCTSIITEDEKGHLLHGRNMDFGIFLGWNINNNTWVVTEELKPLTVNLDFQRNNKTVFKATSFVGYVGMLTGFKPGLFSLSLNERFSINGGYLGILEWMFGRKDAQWVGFITRSVLENTTSYEEAKNTLTKTKIMAPVYFILGGKKSGEGCVITRERKESLDVYELDPKHGRWYVVQTNYDRWKNTLFIDDRRTPAKKCLNHTTQKNLSFATIYDVLSTKPVLNKLTVFTTLMDVTKGQFESHLRDCPDPCIGW.

Residues 1-18 form the signal peptide; sequence MRGQSLLTWVLAAAVTCA. The cysteines at positions 30 and 339 are disulfide-linked. Cysteine 142 acts as the Nucleophile in catalysis. Asparagine 172, asparagine 194, asparagine 258, asparagine 341, and asparagine 347 each carry an N-linked (GlcNAc...) asparagine glycan. A disulfide bond links cysteine 387 and cysteine 391.

The protein belongs to the acid ceramidase family. As to quaternary structure, heterodimer; disulfide-linked. The heterodimer is composed of the disulfide-linked alpha and beta chains produced by autocatalytic cleavage of the precursor. In terms of processing, N-glycosylated. Proteolytically cleaved into two chains alpha and beta that remain associated via a disulfide bond. Cleavage gives rise to a conformation change that activates the enzyme. The same catalytic Cys residue mediates the autoproteolytic cleavage and subsequent hydrolysis of lipid substrates. The beta chain may undergo an additional C-terminal processing. As to expression, widely expressed.

It is found in the lysosome. The protein resides in the secreted. It catalyses the reaction an N-acylsphing-4-enine + H2O = sphing-4-enine + a fatty acid. The enzyme catalyses N-dodecanoylsphing-4-enine + H2O = dodecanoate + sphing-4-enine. It carries out the reaction N-(9Z-octadecenoyl)-sphing-4-enine + H2O = sphing-4-enine + (9Z)-octadecenoate. The catalysed reaction is N-tetradecanoylsphing-4-enine + H2O = tetradecanoate + sphing-4-enine. It catalyses the reaction N-hexadecanoylsphing-4-enine + H2O = sphing-4-enine + hexadecanoate. The enzyme catalyses N-octadecanoylsphing-4-enine + H2O = sphing-4-enine + octadecanoate. It carries out the reaction N-dodecanoyl-(4R)-hydroxysphinganine + H2O = (4R)-hydroxysphinganine + dodecanoate. The catalysed reaction is N-(dodecanoyl)-sphinganine + H2O = dodecanoate + sphinganine. It catalyses the reaction N-(acetyl)-sphing-4-enine + H2O = sphing-4-enine + acetate. The enzyme catalyses N-(hexanoyl)sphing-4-enine + H2O = hexanoate + sphing-4-enine. It carries out the reaction N-octanoylsphing-4-enine + H2O = octanoate + sphing-4-enine. The catalysed reaction is N-dodecanoylethanolamine + H2O = dodecanoate + ethanolamine. It participates in lipid metabolism; sphingolipid metabolism. Lysosomal ceramidase that hydrolyzes sphingolipid ceramides into sphingosine and free fatty acids at acidic pH. Ceramides, sphingosine, and its phosphorylated form sphingosine-1-phosphate are bioactive lipids that mediate cellular signaling pathways regulating several biological processes including cell proliferation, apoptosis and differentiation. Has a higher catalytic efficiency towards C12-ceramides versus other ceramides. Also catalyzes the reverse reaction allowing the synthesis of ceramides from fatty acids and sphingosine. For the reverse synthetic reaction, the natural sphingosine D-erythro isomer is more efficiently utilized as a substrate compared to D-erythro-dihydrosphingosine and D-erythro-phytosphingosine, while the fatty acids with chain lengths of 12 or 14 carbons are the most efficiently used. Also has an N-acylethanolamine hydrolase activity. By regulating the levels of ceramides, sphingosine and sphingosine-1-phosphate in the epidermis, mediates the calcium-induced differentiation of epidermal keratinocytes. Also indirectly regulates tumor necrosis factor/TNF-induced apoptosis. By regulating the intracellular balance between ceramides and sphingosine, in adrenocortical cells, probably also acts as a regulator of steroidogenesis. This is Acid ceramidase from Mus musculus (Mouse).